A 211-amino-acid polypeptide reads, in one-letter code: Thiamine-phosphate synthase (211 aa).

Residues 37 to 41 (QLRIK) and Asn-69 contribute to the 4-amino-2-methyl-5-(diphosphooxymethyl)pyrimidine site. Positions 70 and 89 each coordinate Mg(2+). Ser-108 is a 4-amino-2-methyl-5-(diphosphooxymethyl)pyrimidine binding site. 134-136 (TQT) is a binding site for 2-[(2R,5Z)-2-carboxy-4-methylthiazol-5(2H)-ylidene]ethyl phosphate. Residue Lys-137 participates in 4-amino-2-methyl-5-(diphosphooxymethyl)pyrimidine binding. 2-[(2R,5Z)-2-carboxy-4-methylthiazol-5(2H)-ylidene]ethyl phosphate is bound by residues Gly-166 and 186–187 (VS).

The protein belongs to the thiamine-phosphate synthase family. Requires Mg(2+) as cofactor.

It carries out the reaction 2-[(2R,5Z)-2-carboxy-4-methylthiazol-5(2H)-ylidene]ethyl phosphate + 4-amino-2-methyl-5-(diphosphooxymethyl)pyrimidine + 2 H(+) = thiamine phosphate + CO2 + diphosphate. The catalysed reaction is 2-(2-carboxy-4-methylthiazol-5-yl)ethyl phosphate + 4-amino-2-methyl-5-(diphosphooxymethyl)pyrimidine + 2 H(+) = thiamine phosphate + CO2 + diphosphate. It catalyses the reaction 4-methyl-5-(2-phosphooxyethyl)-thiazole + 4-amino-2-methyl-5-(diphosphooxymethyl)pyrimidine + H(+) = thiamine phosphate + diphosphate. It functions in the pathway cofactor biosynthesis; thiamine diphosphate biosynthesis; thiamine phosphate from 4-amino-2-methyl-5-diphosphomethylpyrimidine and 4-methyl-5-(2-phosphoethyl)-thiazole: step 1/1. Functionally, condenses 4-methyl-5-(beta-hydroxyethyl)thiazole monophosphate (THZ-P) and 2-methyl-4-amino-5-hydroxymethyl pyrimidine pyrophosphate (HMP-PP) to form thiamine monophosphate (TMP). This is Thiamine-phosphate synthase from Escherichia coli O9:H4 (strain HS).